Consider the following 325-residue polypeptide: Olfactory receptor 1S2 (325 aa).

At 1 to 38 (MKTLCSFLQISRNMHQENQTTITEFILLGLSNQAEHQN) the chain is on the extracellular side. N18 carries N-linked (GlcNAc...) asparagine glycosylation. Residues 39 to 62 (LLFVLFLSMYVVTVVGNGLIIVAI) traverse the membrane as a helical segment. Topologically, residues 63 to 70 (SLDIYLHT) are cytoplasmic. The helical transmembrane segment at 71 to 92 (PMYLFLAYLSFADISSISNSVP) threads the bilayer. The Extracellular segment spans residues 93–113 (KMLVNIQTNSQSISYESCITQ). C110 and C202 are oxidised to a cystine. The chain crosses the membrane as a helical span at residues 114–133 (MYFSIVFVVTDNLLLGTMAF). The Cytoplasmic portion of the chain corresponds to 134–152 (DHFVAICHPLNYTTFMRAR). The chain crosses the membrane as a helical span at residues 153-171 (FGTLLTVISWFLSNIIALT). Residues 172 to 208 (HTLLLIQLLFCDHNTLPHFFCDLAPLLKLSCSDTMIN) are Extracellular-facing. A helical transmembrane segment spans residues 209-232 (ELVLFIVGLSVIIFPFVLIFFSYV). Residues 233-249 (CIIRAVLGVSSTQGKWK) are Cytoplasmic-facing. The helical transmembrane segment at 250–272 (AFSTCGSHLTIALLFYGTTVGVY) threads the bilayer. Residues 273–285 (FFPSSTHPEDTDK) are Extracellular-facing. A helical transmembrane segment spans residues 286–305 (IGAVLFTVVTPMMNPFIYSL). The Cytoplasmic segment spans residues 306–325 (RNKDMKGALRKLINRKISSL).

The protein belongs to the G-protein coupled receptor 1 family.

The protein localises to the cell membrane. In terms of biological role, odorant receptor. The sequence is that of Olfactory receptor 1S2 (OR1S2) from Homo sapiens (Human).